A 322-amino-acid polypeptide reads, in one-letter code: Malate dehydrogenase (322 aa).

NAD(+)-binding positions include 10 to 15 and aspartate 34; that span reads GSGQIG. Substrate is bound by residues arginine 83 and arginine 89. NAD(+) is bound by residues asparagine 96 and 119 to 121; that span reads ITN. The substrate site is built by asparagine 121 and arginine 152. Residue histidine 176 is the Proton acceptor of the active site.

Belongs to the LDH/MDH superfamily. MDH type 3 family.

The catalysed reaction is (S)-malate + NAD(+) = oxaloacetate + NADH + H(+). Functionally, catalyzes the reversible oxidation of malate to oxaloacetate. The protein is Malate dehydrogenase of Bradyrhizobium sp. (strain BTAi1 / ATCC BAA-1182).